The primary structure comprises 356 residues: D-alanine--D-alanine ligase (356 aa).

In terms of domain architecture, ATP-grasp spans 146–350 (KKLLVAEGLP…YAELLDTLIQ (205 aa)). 173-228 (KERLGLPVFVKPARGGSSIGVSKVSAWEDLEAALTLAYESDDKVLIEPEISGAEVE) contributes to the ATP binding site. Residues D305, E317, and N319 each coordinate Mg(2+).

Belongs to the D-alanine--D-alanine ligase family. Mg(2+) serves as cofactor. The cofactor is Mn(2+).

Its subcellular location is the cytoplasm. It catalyses the reaction 2 D-alanine + ATP = D-alanyl-D-alanine + ADP + phosphate + H(+). Its pathway is cell wall biogenesis; peptidoglycan biosynthesis. Cell wall formation. This Corynebacterium aurimucosum (strain ATCC 700975 / DSM 44827 / CIP 107346 / CN-1) (Corynebacterium nigricans) protein is D-alanine--D-alanine ligase.